Here is a 300-residue protein sequence, read N- to C-terminus: MSTPFVTTLSSSLYGLLKDRLEEKGFILTQPQYTIFQARSPSVMCTLYSSGKLVVQGKGSKEFIEFFLEPEILLTFTHNRVEADLRPRLGVDESGKGDFFGPLCIAGVYARDEETLKSLYKTKIQDSKLLNDAQILSLAKTIRSSCTYDVMILYPEKYNELYGKFHNLNILLAWAHATIIDKLAPRPSGEVFAISDQFASSESVLLNALKKKNTDISVIQKVRAEQDIVVAAASILAREAFITTMTNLEQRFSLKLPKGASAQVKSVGKSILNSRGKEVLSLVCKTHFKTFNEICDSASA.

The RNase H type-2 domain maps to 86–300 (RPRLGVDESG…FNEICDSASA (215 aa)). Asp-92, Glu-93, and Asp-196 together coordinate a divalent metal cation.

Belongs to the RNase HII family. RnhC subfamily. Mn(2+) is required as a cofactor. Requires Mg(2+) as cofactor.

The protein resides in the cytoplasm. The enzyme catalyses Endonucleolytic cleavage to 5'-phosphomonoester.. Endonuclease that specifically degrades the RNA of RNA-DNA hybrids. The protein is Ribonuclease HIII of Chlamydia felis (strain Fe/C-56) (Chlamydophila felis).